Reading from the N-terminus, the 323-residue chain is D-alanine--D-alanine ligase (323 aa).

An ATP-grasp domain is found at 121–317 (RIWFLTNNIN…FTNLIEEIIK (197 aa)). Residue 147-199 (PMKRPYVIKPLAQGSSIGVEVIFAEDDFNFADYDFPYGDQVIIEQYIKGQGRE) participates in ATP binding. Residues glutamate 270, glutamate 284, and asparagine 286 each contribute to the Mg(2+) site.

The protein belongs to the D-alanine--D-alanine ligase family. It depends on Mg(2+) as a cofactor. Mn(2+) serves as cofactor.

Its subcellular location is the cytoplasm. It catalyses the reaction 2 D-alanine + ATP = D-alanyl-D-alanine + ADP + phosphate + H(+). Its pathway is cell wall biogenesis; peptidoglycan biosynthesis. Its function is as follows. Cell wall formation. The chain is D-alanine--D-alanine ligase from Rickettsia peacockii (strain Rustic).